Reading from the N-terminus, the 310-residue chain is Putative HTH-type transcriptional regulatory protein LS215_1371 (310 aa).

The 56-residue stretch at 125 to 180 (LKHKREEMGYSIGDVAKFLGVSRKAIYDYEKGDSDVSLEVAEKLIDLFGDDIIGDV) folds into the HTH cro/C1-type domain. Positions 136–155 (IGDVAKFLGVSRKAIYDYEK) form a DNA-binding region, H-T-H motif.

The sequence is that of Putative HTH-type transcriptional regulatory protein LS215_1371 from Saccharolobus islandicus (strain L.S.2.15 / Lassen #1) (Sulfolobus islandicus).